The following is a 119-amino-acid chain: Beta-2-microglobulin (119 aa).

A signal peptide spans 1–20 (MARFVVVPLFVLLSLFGLEA). One can recognise an Ig-like C1-type domain in the interval 25 to 114 (PKIQVYSRYP…VTFSTPKTVK (90 aa)). C45 and C100 are oxidised to a cystine.

Belongs to the beta-2-microglobulin family. As to quaternary structure, heterodimer of an alpha chain and a beta chain. Beta-2-microglobulin is the beta-chain of major histocompatibility complex class I molecules.

The protein resides in the secreted. Component of the class I major histocompatibility complex (MHC). Involved in the presentation of peptide antigens to the immune system. The chain is Beta-2-microglobulin (B2M) from Saguinus niger (Black tamarin).